The primary structure comprises 121 residues: Large ribosomal subunit protein bL12 (121 aa).

It belongs to the bacterial ribosomal protein bL12 family. In terms of assembly, homodimer. Part of the ribosomal stalk of the 50S ribosomal subunit. Forms a multimeric L10(L12)X complex, where L10 forms an elongated spine to which 2 to 4 L12 dimers bind in a sequential fashion. Binds GTP-bound translation factors.

Functionally, forms part of the ribosomal stalk which helps the ribosome interact with GTP-bound translation factors. Is thus essential for accurate translation. The protein is Large ribosomal subunit protein bL12 of Streptococcus pyogenes serotype M3 (strain ATCC BAA-595 / MGAS315).